We begin with the raw amino-acid sequence, 510 residues long: Bifunctional pantoate ligase/cytidylate kinase (510 aa).

The pantoate--beta-alanine ligase stretch occupies residues 1 to 276 (MKKVIIRKTE…CGETRLIDHV (276 aa)). 29–36 (MGNLHNGH) contributes to the ATP binding site. His36 (proton donor) is an active-site residue. Residue Gln61 participates in (R)-pantoate binding. A beta-alanine-binding site is contributed by Gln61. Position 150 to 153 (150 to 153 (GEKD)) interacts with ATP. Gln156 is a (R)-pantoate binding site. 187–190 (LSSR) provides a ligand contact to ATP. A cytidylate kinase region spans residues 277–510 (FLMKRSPIIA…DKIPKETQIR (234 aa)).

This sequence in the N-terminal section; belongs to the pantothenate synthetase family. It in the C-terminal section; belongs to the cytidylate kinase family. Type 1 subfamily.

It localises to the cytoplasm. The catalysed reaction is (R)-pantoate + beta-alanine + ATP = (R)-pantothenate + AMP + diphosphate + H(+). It catalyses the reaction CMP + ATP = CDP + ADP. The enzyme catalyses dCMP + ATP = dCDP + ADP. Its pathway is cofactor biosynthesis; (R)-pantothenate biosynthesis; (R)-pantothenate from (R)-pantoate and beta-alanine: step 1/1. Functionally, catalyzes the condensation of pantoate with beta-alanine in an ATP-dependent reaction via a pantoyl-adenylate intermediate. Its function is as follows. Catalyzes the transfer of a phosphate group from ATP to either CMP or dCMP to form CDP or dCDP and ADP, respectively. The protein is Bifunctional pantoate ligase/cytidylate kinase of Prochlorococcus marinus (strain MIT 9312).